A 123-amino-acid chain; its full sequence is Large ribosomal subunit protein uL18 (123 aa).

Belongs to the universal ribosomal protein uL18 family. As to quaternary structure, part of the 50S ribosomal subunit; part of the 5S rRNA/L5/L18/L25 subcomplex. Contacts the 5S and 23S rRNAs.

Functionally, this is one of the proteins that bind and probably mediate the attachment of the 5S RNA into the large ribosomal subunit, where it forms part of the central protuberance. This Chlamydia muridarum (strain MoPn / Nigg) protein is Large ribosomal subunit protein uL18.